The chain runs to 382 residues: Protein arginine N-methyltransferase 2 (382 aa).

ANK repeat units lie at residues 22–46 and 48–80; these read AAQT…FQDD and LGWS…AVDK. Positions 134-382 constitute an RMT2 domain; that stretch reads KTSAGDNLVF…RLPIAKMSLI (249 aa). Residues Phe143, Met177, 205–210, 228–230, 255–256, and Asp284 contribute to the S-adenosyl-L-methionine site; these read FGLGIV, EAH, and WQ.

It belongs to the class I-like SAM-binding methyltransferase superfamily. RMT2 methyltransferase family. Monomer.

It is found in the cytoplasm. Its subcellular location is the nucleus. Functionally, S-adenosyl-L-methionine-dependent protein-arginine N-methyltransferase that methylates the delta-nitrogen atom of arginine residues to form N5-methylarginine (type IV) in target proteins. Monomethylates ribosomal protein L12. The protein is Protein arginine N-methyltransferase 2 of Cryptococcus neoformans var. neoformans serotype D (strain JEC21 / ATCC MYA-565) (Filobasidiella neoformans).